A 721-amino-acid chain; its full sequence is Catalase-peroxidase 1 (721 aa).

Residues 98 to 223 (WHAAGSYRVA…LAAVQMGLIY (126 aa)) constitute a cross-link (tryptophyl-tyrosyl-methioninium (Trp-Tyr) (with M-249)). Residue H99 is the Proton acceptor of the active site. Positions 223 to 249 (YVNPEGVNGQPDPLRTAQDVRVTFGRM) form a cross-link, tryptophyl-tyrosyl-methioninium (Tyr-Met) (with W-98). Heme b is bound at residue H264.

It belongs to the peroxidase family. Peroxidase/catalase subfamily. Homodimer or homotetramer. It depends on heme b as a cofactor. In terms of processing, formation of the three residue Trp-Tyr-Met cross-link is important for the catalase, but not the peroxidase activity of the enzyme.

It catalyses the reaction H2O2 + AH2 = A + 2 H2O. It carries out the reaction 2 H2O2 = O2 + 2 H2O. Functionally, bifunctional enzyme with both catalase and broad-spectrum peroxidase activity. The protein is Catalase-peroxidase 1 of Legionella pneumophila (strain Corby).